Here is a 380-residue protein sequence, read N- to C-terminus: Crotonobetainyl-CoA reductase (380 aa).

This sequence belongs to the acyl-CoA dehydrogenase family. Homotetramer. FAD serves as cofactor.

The protein localises to the cytoplasm. It catalyses the reaction 4-(trimethylamino)butanoyl-CoA + oxidized [electron-transfer flavoprotein] + H(+) = crotonobetainyl-CoA + reduced [electron-transfer flavoprotein]. It functions in the pathway amine and polyamine metabolism; carnitine metabolism. Functionally, catalyzes the reduction of crotonobetainyl-CoA to gamma-butyrobetainyl-CoA. The chain is Crotonobetainyl-CoA reductase from Shigella flexneri serotype 5b (strain 8401).